The sequence spans 115 residues: Large ribosomal subunit protein bL19 (115 aa).

This sequence belongs to the bacterial ribosomal protein bL19 family.

This protein is located at the 30S-50S ribosomal subunit interface and may play a role in the structure and function of the aminoacyl-tRNA binding site. The polypeptide is Large ribosomal subunit protein bL19 (Hydrogenovibrio crunogenus (strain DSM 25203 / XCL-2) (Thiomicrospira crunogena)).